The sequence spans 198 residues: Probable chorismate pyruvate-lyase (198 aa).

Residues arginine 73, leucine 111, and glutamate 172 each contribute to the substrate site.

The protein belongs to the UbiC family.

Its subcellular location is the cytoplasm. It catalyses the reaction chorismate = 4-hydroxybenzoate + pyruvate. It participates in cofactor biosynthesis; ubiquinone biosynthesis. Its function is as follows. Removes the pyruvyl group from chorismate, with concomitant aromatization of the ring, to provide 4-hydroxybenzoate (4HB) for the ubiquinone pathway. In Burkholderia lata (strain ATCC 17760 / DSM 23089 / LMG 22485 / NCIMB 9086 / R18194 / 383), this protein is Probable chorismate pyruvate-lyase.